The chain runs to 220 residues: Iron-sulfur cluster repair protein YtfE (220 aa).

Belongs to the RIC family. YtfE subfamily. In terms of assembly, homodimer.

Its subcellular location is the cytoplasm. Di-iron-containing protein involved in the repair of iron-sulfur clusters damaged by oxidative and nitrosative stress conditions. The polypeptide is Iron-sulfur cluster repair protein YtfE (Escherichia coli O81 (strain ED1a)).